Here is a 216-residue protein sequence, read N- to C-terminus: Redox-sensing transcriptional repressor Rex (216 aa).

Positions 20–59 (QYYRLFKSLVEENVTRTNSQLISEKIGVDAATIRRDFSLF) form a DNA-binding region, H-T-H motif. 94 to 99 (GVGNLG) is a binding site for NAD(+).

It belongs to the transcriptional regulatory Rex family. In terms of assembly, homodimer.

Its subcellular location is the cytoplasm. Modulates transcription in response to changes in cellular NADH/NAD(+) redox state. The chain is Redox-sensing transcriptional repressor Rex from Lactococcus lactis subsp. cremoris (strain SK11).